Reading from the N-terminus, the 713-residue chain is MKKQVKWLTSVSMSVGIALGAALPVWASPDTSVNNKLNFSTDTVYQIVTDRFVDGNSANNPTGAAFSSDHSNLKLYFGGDWQGITNKINDGYLTGMGITALWISQPVENITAVINYSGVNNTAYHGYWPRDFKKTNAAFGSFTDFSNLIAAAHSHNIKVVMDFAPNHTNPASSTDPSFAENGALYNNGTLLGKYSNDTAGLFHHNGGTDFSTTESGIYKNLYDLADINQNNNTIDSYLKESIQLWLNLGVDGIRFDAVKHMPQGWQKSYVSSIYSSANPVFTFGEWFLGPDEMTQDNINFANQSGMHLLDFAFAQEIREVFRDKSETMTDLNSVISSTGSSYNYINNMVTFIDNHDMDRFQQAGASTRPTEQALAVTLTSRGVPAIYYGTEQYMTGNGDPNNRGMMTGFDTNKTAYKVIKALAPLRKSNPALAYGSTTQRWVNSDVYVYERKFGSNVALVAVNRSSTTAYPISGALTALPNGTYTDVLGGLLNGNSITVNGGTVSNFTLAAGGTAVWQYTTTESSPIIGNVGPTMGKPGNTITIDGRGFGTTKNKVTFGTTAVTGANIVSWEDTEIKVKVPNVAAGNTAVTVTNAAGTTSAAFNNFNVLTADQVTVRFKVNNATTALGQNVYLTGNVAELGNWTAANAIGPMYNQVEASYPTWYFDVSVPANTALQFKFIKVNGSTVTWEGGNNHTFTSPSSGVATVTVDWQN.

The N-terminal stretch at 1–27 is a signal peptide; the sequence is MKKQVKWLTSVSMSVGIALGAALPVWA. The segment at 28-165 is A1; the sequence is SPDTSVNNKL…NIKVVMDFAP (138 aa). Ca(2+)-binding residues include D54, N56, N59, N60, G78, and D80. 127–128 is a binding site for substrate; sequence YW. N166 contacts Ca(2+). The segment at 166 to 229 is b; that stretch reads NHTNPASSTD…NLYDLADINQ (64 aa). H167 contacts substrate. Residue I217 participates in Ca(2+) binding. 220-223 contacts substrate; the sequence is NLYD. Residue D226 coordinates Ca(2+). The A2 stretch occupies residues 230–434; it reads NNNTIDSYLK…LRKSNPALAY (205 aa). A substrate-binding site is contributed by R254. The active-site Nucleophile is the D256. 259–260 provides a ligand contact to substrate; the sequence is KH. Position 260 (H260) interacts with Ca(2+). Residue E285 is the Proton donor of the active site. Substrate contacts are provided by H355, D399, and R403. The c stretch occupies residues 435-522; sequence GSTTQRWVNS…GTAVWQYTTT (88 aa). The d stretch occupies residues 523 to 609; sequence ESSPIIGNVG…SAAFNNFNVL (87 aa). One can recognise an IPT/TIG domain in the interval 526–606; it reads PIIGNVGPTM…GTTSAAFNNF (81 aa). In terms of domain architecture, CBM20 spans 608–713; the sequence is VLTADQVTVR…VATVTVDWQN (106 aa). Positions 610–713 are e; sequence TADQVTVRFK…VATVTVDWQN (104 aa).

This sequence belongs to the glycosyl hydrolase 13 family. Monomer. Ca(2+) is required as a cofactor.

The protein resides in the secreted. It catalyses the reaction Cyclizes part of a (1-&gt;4)-alpha-D-glucan chain by formation of a (1-&gt;4)-alpha-D-glucosidic bond.. The sequence is that of Cyclomaltodextrin glucanotransferase from Paenibacillus macerans (Bacillus macerans).